Here is a 455-residue protein sequence, read N- to C-terminus: DNA N(6)-methyladenine demethylase ALKBH1C (455 aa).

2 disordered regions span residues Met1–Asn114 and Ser173–Ser194. A Fe2OG dioxygenase domain is found at Leu345–Tyr455. Position 352-354 (Asn352–Tyr354) interacts with 2-oxoglutarate. Fe cation-binding residues include His363, Asp365, and His423. Arg447–Arg453 serves as a coordination point for 2-oxoglutarate.

It belongs to the alkB family. Requires Fe(2+) as cofactor. As to expression, expressed at low levels in roots and seedlings, but barely in cauline leaves, rosette leaves, stems, siliques and flowers.

It is found in the nucleus. Its subcellular location is the cytoplasm. The enzyme catalyses an N(6)-methyl-2'-deoxyadenosine in DNA + 2-oxoglutarate + O2 = a 2'-deoxyadenosine in DNA + formaldehyde + succinate + CO2. Its function is as follows. Dioxygenase that catalyzes DNA N(6)-methyladenine (6 mA) demethylation with a low efficiency. The chain is DNA N(6)-methyladenine demethylase ALKBH1C from Arabidopsis thaliana (Mouse-ear cress).